The primary structure comprises 482 residues: UDP-N-acetylmuramate--L-alanine ligase (482 aa).

129-135 is a binding site for ATP; that stretch reads GTHGKTT.

Belongs to the MurCDEF family.

Its subcellular location is the cytoplasm. The enzyme catalyses UDP-N-acetyl-alpha-D-muramate + L-alanine + ATP = UDP-N-acetyl-alpha-D-muramoyl-L-alanine + ADP + phosphate + H(+). It functions in the pathway cell wall biogenesis; peptidoglycan biosynthesis. Functionally, cell wall formation. The chain is UDP-N-acetylmuramate--L-alanine ligase from Acinetobacter baumannii (strain SDF).